The sequence spans 163 residues: MEMLQGLLLCLLLSTGGAWASKEPLRPPCRPTNVILAVEKEGCPVCVPFNTTICAGYCSSMVRVMQTLPPLPQTVCNYHELRFTSVRLPGCRRGVDPVVYMPMAVSCRCALCRRSYSDCGSFRNESLGCDYATSQDSSSNVPPSNLTSPSQLLEPAVTPLVPQ.

Positions 1 to 20 (MEMLQGLLLCLLLSTGGAWA) are cleaved as a signal peptide. 6 disulfides stabilise this stretch: C29-C76, C43-C91, C46-C129, C54-C107, C58-C109, and C112-C119. N50 is a glycosylation site (N-linked (GlcNAc...) asparagine). Residue N124 is glycosylated (N-linked (GlcNAc...) asparagine). Over residues 135-151 (QDSSSNVPPSNLTSPSQ) the composition is skewed to polar residues. A disordered region spans residues 135–163 (QDSSSNVPPSNLTSPSQLLEPAVTPLVPQ). The O-linked (GalNAc...) serine glycan is linked to S139. A glycan (N-linked (GlcNAc...) asparagine) is linked at N145. S150 is a glycosylation site (O-linked (GalNAc...) serine).

It belongs to the glycoprotein hormones subunit beta family. Heterodimer of a common alpha chain and a unique beta chain which confers biological specificity to thyrotropin, lutropin, follitropin and gonadotropin.

Its subcellular location is the secreted. Stimulates the ovaries to synthesize the steroids that are essential for the maintenance of pregnancy. The protein is Choriogonadotropin subunit beta (CGB) of Saimiri boliviensis boliviensis (Bolivian squirrel monkey).